We begin with the raw amino-acid sequence, 505 residues long: Probable folylpolyglutamate synthase (505 aa).

89 to 92 (GKGS) lines the ATP pocket. Positions 121, 190, and 218 each coordinate Mg(2+). Residues Arg-332 and Asp-346 each contribute to the ATP site.

The protein belongs to the folylpolyglutamate synthase family. Requires a monovalent cation as cofactor.

The protein localises to the mitochondrion inner membrane. It is found in the mitochondrion matrix. The protein resides in the cytoplasm. It carries out the reaction (6S)-5,6,7,8-tetrahydrofolyl-(gamma-L-Glu)(n) + L-glutamate + ATP = (6S)-5,6,7,8-tetrahydrofolyl-(gamma-L-Glu)(n+1) + ADP + phosphate + H(+). It functions in the pathway cofactor biosynthesis; tetrahydrofolylpolyglutamate biosynthesis. In terms of biological role, catalyzes conversion of folates to polyglutamate derivatives allowing concentration of folate compounds in the cell and the intracellular retention of these cofactors, which are important substrates for most of the folate-dependent enzymes that are involved in one-carbon transfer reactions involved in purine, pyrimidine and amino acid synthesis. The chain is Probable folylpolyglutamate synthase (met7) from Schizosaccharomyces pombe (strain 972 / ATCC 24843) (Fission yeast).